The following is a 183-amino-acid chain: Photosystem I assembly protein Ycf4 (183 aa).

The next 2 helical transmembrane spans lie at 21–43 and 63–85; these read YIWG…SSYL and LVMC…LILW.

Belongs to the Ycf4 family.

It localises to the plastid. Its subcellular location is the chloroplast thylakoid membrane. Seems to be required for the assembly of the photosystem I complex. This is Photosystem I assembly protein Ycf4 from Chlorella vulgaris (Green alga).